We begin with the raw amino-acid sequence, 210 residues long: Proteasome subunit beta (210 aa).

A propeptide spans 1–10 (removed in mature form; by autocatalysis); it reads MKELDQLTKG. The Nucleophile role is filled by Thr11.

The protein belongs to the peptidase T1B family. In terms of assembly, the 20S proteasome core is composed of 14 alpha and 14 beta subunits that assemble into four stacked heptameric rings, resulting in a barrel-shaped structure. The two inner rings, each composed of seven catalytic beta subunits, are sandwiched by two outer rings, each composed of seven alpha subunits. The catalytic chamber with the active sites is on the inside of the barrel. Has a gated structure, the ends of the cylinder being occluded by the N-termini of the alpha-subunits. Is capped at one or both ends by the proteasome regulatory ATPase, PAN.

The protein localises to the cytoplasm. The catalysed reaction is Cleavage of peptide bonds with very broad specificity.. Its activity is regulated as follows. The formation of the proteasomal ATPase PAN-20S proteasome complex, via the docking of the C-termini of PAN into the intersubunit pockets in the alpha-rings, triggers opening of the gate for substrate entry. Interconversion between the open-gate and close-gate conformations leads to a dynamic regulation of the 20S proteasome proteolysis activity. Functionally, component of the proteasome core, a large protease complex with broad specificity involved in protein degradation. This is Proteasome subunit beta from Methanopyrus kandleri (strain AV19 / DSM 6324 / JCM 9639 / NBRC 100938).